The chain runs to 426 residues: Glutamate-1-semialdehyde 2,1-aminomutase (426 aa).

Position 265 is an N6-(pyridoxal phosphate)lysine (lysine 265).

Belongs to the class-III pyridoxal-phosphate-dependent aminotransferase family. HemL subfamily. As to quaternary structure, homodimer. Pyridoxal 5'-phosphate serves as cofactor.

The protein localises to the cytoplasm. It catalyses the reaction (S)-4-amino-5-oxopentanoate = 5-aminolevulinate. It participates in porphyrin-containing compound metabolism; protoporphyrin-IX biosynthesis; 5-aminolevulinate from L-glutamyl-tRNA(Glu): step 2/2. This is Glutamate-1-semialdehyde 2,1-aminomutase from Halorhodospira halophila (strain DSM 244 / SL1) (Ectothiorhodospira halophila (strain DSM 244 / SL1)).